Here is a 314-residue protein sequence, read N- to C-terminus: MDVQPTTMRGAVKTAHLGTDVSLATKPLPKPEWLRGKSASTPDVERLVRILRDNRLHTVCEEASCPNLGECFRKGTATFMIMGDVCTRHCPFCNVAHGSPHELAADEPVNLARAVELLKLSYVVITSVTRDDLPDGGAGHYGACVRALRDLKRSLKVEILTPDFRGAVAVAFEELRMNLPDVFNHNLETVPRLYPRVRPQADYHGSLDLLLRFREQFDHVPTKSGLMLGLGETEQEVRDVMEELRRHRCDMLTLGQYMRPSPHHLPVERYVTPDEFERYRQFGLSIGFSHVESGPMVRSSYHADMQARELMLVN.

[4Fe-4S] cluster contacts are provided by Cys60, Cys65, Cys71, Cys86, Cys90, Cys93, and Ser300. Residues 72–289 enclose the Radical SAM core domain; sequence FRKGTATFMI…RQFGLSIGFS (218 aa).

It belongs to the radical SAM superfamily. Lipoyl synthase family. Requires [4Fe-4S] cluster as cofactor.

The protein resides in the cytoplasm. It carries out the reaction [[Fe-S] cluster scaffold protein carrying a second [4Fe-4S](2+) cluster] + N(6)-octanoyl-L-lysyl-[protein] + 2 oxidized [2Fe-2S]-[ferredoxin] + 2 S-adenosyl-L-methionine + 4 H(+) = [[Fe-S] cluster scaffold protein] + N(6)-[(R)-dihydrolipoyl]-L-lysyl-[protein] + 4 Fe(3+) + 2 hydrogen sulfide + 2 5'-deoxyadenosine + 2 L-methionine + 2 reduced [2Fe-2S]-[ferredoxin]. It functions in the pathway protein modification; protein lipoylation via endogenous pathway; protein N(6)-(lipoyl)lysine from octanoyl-[acyl-carrier-protein]: step 2/2. Its function is as follows. Catalyzes the radical-mediated insertion of two sulfur atoms into the C-6 and C-8 positions of the octanoyl moiety bound to the lipoyl domains of lipoate-dependent enzymes, thereby converting the octanoylated domains into lipoylated derivatives. This Pelobacter propionicus (strain DSM 2379 / NBRC 103807 / OttBd1) protein is Lipoyl synthase.